We begin with the raw amino-acid sequence, 161 residues long: 2-C-methyl-D-erythritol 2,4-cyclodiphosphate synthase (161 aa).

The a divalent metal cation site is built by Asp11 and His13. 4-CDP-2-C-methyl-D-erythritol 2-phosphate is bound by residues 11 to 13 and 37 to 38; these read DIH and HS. Residue His45 participates in a divalent metal cation binding. 4-CDP-2-C-methyl-D-erythritol 2-phosphate is bound by residues 59-61, 135-138, and Arg145; these read DIG and TTNE.

The protein belongs to the IspF family. Homotrimer. It depends on a divalent metal cation as a cofactor.

It catalyses the reaction 4-CDP-2-C-methyl-D-erythritol 2-phosphate = 2-C-methyl-D-erythritol 2,4-cyclic diphosphate + CMP. It functions in the pathway isoprenoid biosynthesis; isopentenyl diphosphate biosynthesis via DXP pathway; isopentenyl diphosphate from 1-deoxy-D-xylulose 5-phosphate: step 4/6. Involved in the biosynthesis of isopentenyl diphosphate (IPP) and dimethylallyl diphosphate (DMAPP), two major building blocks of isoprenoid compounds. Catalyzes the conversion of 4-diphosphocytidyl-2-C-methyl-D-erythritol 2-phosphate (CDP-ME2P) to 2-C-methyl-D-erythritol 2,4-cyclodiphosphate (ME-CPP) with a corresponding release of cytidine 5-monophosphate (CMP). The sequence is that of 2-C-methyl-D-erythritol 2,4-cyclodiphosphate synthase from Synechocystis sp. (strain ATCC 27184 / PCC 6803 / Kazusa).